Consider the following 58-residue polypeptide: Large ribosomal subunit protein uL30 (58 aa).

This sequence belongs to the universal ribosomal protein uL30 family. In terms of assembly, part of the 50S ribosomal subunit.

The chain is Large ribosomal subunit protein uL30 from Acinetobacter baumannii (strain AB307-0294).